We begin with the raw amino-acid sequence, 586 residues long: Arginine--tRNA ligase (586 aa).

Residues 133–143 (ANPTGPLNIVS) carry the 'HIGH' region motif.

The protein belongs to the class-I aminoacyl-tRNA synthetase family. As to quaternary structure, monomer.

It localises to the cytoplasm. The enzyme catalyses tRNA(Arg) + L-arginine + ATP = L-arginyl-tRNA(Arg) + AMP + diphosphate. This chain is Arginine--tRNA ligase, found in Leptospira interrogans serogroup Icterohaemorrhagiae serovar Lai (strain 56601).